The primary structure comprises 885 residues: MYRGKRVKLEDETEGSWKSFAAVRMTAVDDISDSTEVVEMEDVPSQFFVEKHSWDGLRDIIHNSRMYSGMVINKAPHDFQFVQKHDESGPHSHRLYYLGMPYGSRENSLLYSEIPKKIRKEALLVLSWKQMLDHFQATPHHGVYSREEELLRERKRLGVFGITSYDYHAQSGLFLFQASNSLFYCRDGGHNGFIQAAPMKPMEIKTQCSGIRMDPKISPGDPSFIAFINNNDLWVTNIETAEERRLTFCHKGLNNVKEDPKSAGVATFVIQEEFDRFTGYWWSPAATEDADGGKTLQLLYEEVDESEVEIIHVPSPALEERKADVYRYPRTGSKNPQISLKLAEIRTDQQGKMISAQNKELVLPFTTLFPGVEYIARAGWTKDGKFAWAVLLDRSQQKLQLVLLPPALFIPVSVDDPQWEEHVEAMPEGVQPFIIYEEITDIWINVHDIFYPFIQTSNDKISFLWVNESQTGFCHLYRITSLLKPGCHQWSREYSPSEDDFKCSTEEEVALTSGEWEVLARHGSKIWVNEETKLVYFQGTKDTPLEHHLYVVSYESPGEIVRLTKPGFSHSCSVSQNFDMFISHYSNVSTPPCVHVYKLTGADSDPLHKEPEFWASMMEATGCRPDYIPPEIFSFPASSGFRLYGMLYKPHNLKPGKKHPTILFVYGGPQVQLVNNSYKGVKYLRLNTLASLGYAVVVIDGRGSCQRGLKFEGALKNKMGQVEIEDQVEGLQFVAEKYKFIDLSRVAIHGWSYGGFLSLMGLIHRPNIFKVAIAGAPVTVWMAYDTGYTERYMDVPENNQQGYEAGSVALHVDKLPNEPNRLLILHGFLDENVHFFHTNFLVSQLIRAGKPYQLQIYPNERHSIRCPESGEHYEIMLLYFLQQHL.

Residues S752, D830, and H862 each act as charge relay system in the active site. S752 provides a ligand contact to Val-boroPro.

This sequence belongs to the peptidase S9B family. DPPIV subfamily. Homodimer. Forms a ternary complex with NLRP1, composed of a DPP9 homodimer, one full-length NLRP1 protein, and one cleaved C-terminus of NLRP1 (NACHT, LRR and PYD domains-containing protein 1, C-terminus).

The protein localises to the nucleus. It catalyses the reaction Release of an N-terminal dipeptide, Xaa-Yaa-|-Zaa-, from a polypeptide, preferentially when Yaa is Pro, provided Zaa is neither Pro nor hydroxyproline.. Dipeptidyl peptidase that cleaves off N-terminal dipeptides from proteins having a Pro or Ala residue at position 2. Acts as a key inhibitor of the NLRP1 inflammasome. This is Dipeptidyl peptidase 9 from Danio rerio (Zebrafish).